The chain runs to 398 residues: Acetate kinase (398 aa).

A Mg(2+)-binding site is contributed by asparagine 7. Lysine 14 serves as a coordination point for ATP. Residue arginine 91 coordinates substrate. The Proton donor/acceptor role is filled by aspartate 148. ATP is bound by residues 208–212, 283–285, and 331–335; these read HIGNG, DMR, and GVGEN. Residue glutamate 384 coordinates Mg(2+).

Belongs to the acetokinase family. In terms of assembly, homodimer. It depends on Mg(2+) as a cofactor. The cofactor is Mn(2+).

The protein localises to the cytoplasm. The enzyme catalyses acetate + ATP = acetyl phosphate + ADP. It participates in metabolic intermediate biosynthesis; acetyl-CoA biosynthesis; acetyl-CoA from acetate: step 1/2. In terms of biological role, catalyzes the formation of acetyl phosphate from acetate and ATP. Can also catalyze the reverse reaction. This is Acetate kinase from Bacteroides fragilis (strain ATCC 25285 / DSM 2151 / CCUG 4856 / JCM 11019 / LMG 10263 / NCTC 9343 / Onslow / VPI 2553 / EN-2).